We begin with the raw amino-acid sequence, 713 residues long: Nuclear poly(A) polymerase 1 (713 aa).

ATP is bound by residues F91–S93, A103–D106, D159, Y229, and G238–I239. The Mg(2+) site is built by D104, D106, and D159. The disordered stretch occupies residues F480–K555. Over residues S507 to S526 the composition is skewed to low complexity.

It belongs to the poly(A) polymerase family. Monomer. Forms a complex with cleavage and polyadenylation specificity factor (CPSF) subunit PAPS4. Mg(2+) serves as cofactor. The cofactor is Mn(2+). In terms of tissue distribution, expressed in stems, cotyledons, hypocotyls, radicle, leaves, and, to a lower extent, in roots (including primary and secondary roots as well as root tips) and flowers. In radicle, roots and leaves, mainly present in vascular tissues.

The protein resides in the nucleus. The catalysed reaction is RNA(n) + ATP = RNA(n)-3'-adenine ribonucleotide + diphosphate. In terms of biological role, essential protein. Polymerase that creates the 3'-poly(A) tail of mRNA's. Also required for the endoribonucleolytic cleavage reaction at some polyadenylation sites. May acquire specificity through interaction with a cleavage and polyadenylation specificity factor (CPSF) at its C-terminus. The chain is Nuclear poly(A) polymerase 1 from Arabidopsis thaliana (Mouse-ear cress).